The primary structure comprises 556 residues: Arginine--tRNA ligase (556 aa).

A 'HIGH' region motif is present at residues 130 to 140; that stretch reads ANPTGPIHLGG.

Belongs to the class-I aminoacyl-tRNA synthetase family. Monomer.

It localises to the cytoplasm. The enzyme catalyses tRNA(Arg) + L-arginine + ATP = L-arginyl-tRNA(Arg) + AMP + diphosphate. In Corynebacterium jeikeium (strain K411), this protein is Arginine--tRNA ligase.